The sequence spans 224 residues: tRNA (guanine-N(7)-)-methyltransferase (224 aa).

Residues glutamate 56, glutamate 81, aspartate 108, and aspartate 131 each contribute to the S-adenosyl-L-methionine site. Residue aspartate 131 is part of the active site. Substrate contacts are provided by residues lysine 135, aspartate 167, and 202–205 (TKFE).

It belongs to the class I-like SAM-binding methyltransferase superfamily. TrmB family.

It catalyses the reaction guanosine(46) in tRNA + S-adenosyl-L-methionine = N(7)-methylguanosine(46) in tRNA + S-adenosyl-L-homocysteine. The protein operates within tRNA modification; N(7)-methylguanine-tRNA biosynthesis. Its function is as follows. Catalyzes the formation of N(7)-methylguanine at position 46 (m7G46) in tRNA. This is tRNA (guanine-N(7)-)-methyltransferase from Nitrosomonas europaea (strain ATCC 19718 / CIP 103999 / KCTC 2705 / NBRC 14298).